The following is a 291-amino-acid chain: MAGVKLLLLSLCVGYTAYHFYSSESMNPESVRGKRVLITGSSTGIGEQIAYEFARMGAHIMVTARRLQRLQEVANECLKLGAASAHYVASDMGNLTSAQYVAQEAVNKLGGLDYLVLNHIGGSASFGFFKGEMDPVVGSIYINFLSYVQLTSAALKALQESQGSIVVMSSMSGRIGAPFTTSYCASKFALEGFYSSLRREFALQNSNMSVTVAVLGYIDTENAVKKVGNKVSMSASSKEDCAREVVKAAVLKQPELFYPYWGIKPFVLLRDWFPGLVAKILDNFYILENIQ.

A signal peptide spans 1–18 (MAGVKLLLLSLCVGYTAY). NADP(+) contacts are provided by residues 40 to 66 (GSST…TARR), 91 to 92 (DM), and 118 to 120 (NHI). Ser170 contributes to the substrate binding site. Tyr183 serves as the catalytic Proton acceptor. NADP(+) contacts are provided by residues 183-187 (YCASK) and 216-222 (GYIDTEN).

This sequence belongs to the short-chain dehydrogenases/reductases (SDR) family.

It is found in the secreted. The catalysed reaction is cortisone + NADPH + H(+) = cortisol + NADP(+). Its function is as follows. Unidirectional NADP(+)-dependent cortisol dehydrogenase (in vitro). The polypeptide is Hydroxysteroid 11-beta-dehydrogenase 1-like protein A (hsd11b1l-a) (Xenopus laevis (African clawed frog)).